The primary structure comprises 121 residues: Aspartate 1-decarboxylase (121 aa).

The active-site Schiff-base intermediate with substrate; via pyruvic acid is the Ser-25. At Ser-25 the chain carries Pyruvic acid (Ser). Thr-57 is a binding site for substrate. Residue Tyr-58 is the Proton donor of the active site. Gly-73–Ala-75 lines the substrate pocket.

It belongs to the PanD family. As to quaternary structure, heterooctamer of four alpha and four beta subunits. Pyruvate is required as a cofactor. Is synthesized initially as an inactive proenzyme, which is activated by self-cleavage at a specific serine bond to produce a beta-subunit with a hydroxyl group at its C-terminus and an alpha-subunit with a pyruvoyl group at its N-terminus.

It localises to the cytoplasm. The enzyme catalyses L-aspartate + H(+) = beta-alanine + CO2. It functions in the pathway cofactor biosynthesis; (R)-pantothenate biosynthesis; beta-alanine from L-aspartate: step 1/1. In terms of biological role, catalyzes the pyruvoyl-dependent decarboxylation of aspartate to produce beta-alanine. The sequence is that of Aspartate 1-decarboxylase from Wolinella succinogenes (strain ATCC 29543 / DSM 1740 / CCUG 13145 / JCM 31913 / LMG 7466 / NCTC 11488 / FDC 602W) (Vibrio succinogenes).